A 461-amino-acid polypeptide reads, in one-letter code: Asparagine--tRNA ligase (461 aa).

The protein belongs to the class-II aminoacyl-tRNA synthetase family. As to quaternary structure, homodimer.

It localises to the cytoplasm. The catalysed reaction is tRNA(Asn) + L-asparagine + ATP = L-asparaginyl-tRNA(Asn) + AMP + diphosphate + H(+). This chain is Asparagine--tRNA ligase, found in Geotalea uraniireducens (strain Rf4) (Geobacter uraniireducens).